The following is a 555-amino-acid chain: Protein PLASTID TRANSCRIPTIONALLY ACTIVE 12, chloroplastic (555 aa).

A chloroplast-targeting transit peptide spans 1–58; sequence MASCYNPWRLFPGMSTAVPAGPVTAPAHSRTCKSSKVFSALPHRRGLLFLGTRRARIK. Disordered regions lie at residues 80–100, 115–167, and 468–541; these read YFDSTSGQLEPASGARASIPG, ARAP…EPDV, and SYNE…IDDS. Residues 144 to 154 show a composition bias toward polar residues; sequence QVTSASGTEGA. 2 stretches are compositionally biased toward acidic residues: residues 471–480 and 490–502; these read EDSDDEDEDV and LEDEEDDRDDVAE. Positions 508–519 are enriched in polar residues; that stretch reads NQNWSALKSTGQ. Residues 521 to 538 show a composition bias toward basic and acidic residues; that stretch reads EKPKEKSKKDEMTLKEAI.

As to quaternary structure, component of the plastid-encoded plastid RNA polymerase (PEP) complex.

Its subcellular location is the plastid. The protein localises to the chloroplast stroma. It localises to the nucleus. Required for the activity of the plastid-encoded RNA polymerase (PEP) and full expression of genes transcribed by PEP. Required for the proper build-up and formation of the PEP-complex. Binds single-stranded (ss) DNA and RNA, but not double-stranded (ds) DNA. This Zea mays (Maize) protein is Protein PLASTID TRANSCRIPTIONALLY ACTIVE 12, chloroplastic.